The primary structure comprises 92 residues: RNA-binding protein Hfq (92 aa).

Residues 9–68 (DPFLNALRRERVPVSVYLVNGIKLQGTIESFDQFVVLLRNTVSQMVYKHAISTVVPARNV) enclose the Sm domain. Residues 73-92 (GGGYVQSNEGNQAEDDDVEQ) form a disordered region.

This sequence belongs to the Hfq family. As to quaternary structure, homohexamer.

Functionally, RNA chaperone that binds small regulatory RNA (sRNAs) and mRNAs to facilitate mRNA translational regulation in response to envelope stress, environmental stress and changes in metabolite concentrations. Also binds with high specificity to tRNAs. This chain is RNA-binding protein Hfq, found in Xanthomonas axonopodis pv. citri (strain 306).